Here is a 1394-residue protein sequence, read N- to C-terminus: DNA-directed RNA polymerase subunit beta'' (1394 aa).

4 residues coordinate Zn(2+): cysteine 224, cysteine 295, cysteine 302, and cysteine 305.

The protein belongs to the RNA polymerase beta' chain family. RpoC2 subfamily. In plastids the minimal PEP RNA polymerase catalytic core is composed of four subunits: alpha, beta, beta', and beta''. When a (nuclear-encoded) sigma factor is associated with the core the holoenzyme is formed, which can initiate transcription. Requires Zn(2+) as cofactor.

The protein resides in the plastid. The protein localises to the chloroplast. The catalysed reaction is RNA(n) + a ribonucleoside 5'-triphosphate = RNA(n+1) + diphosphate. Functionally, DNA-dependent RNA polymerase catalyzes the transcription of DNA into RNA using the four ribonucleoside triphosphates as substrates. The chain is DNA-directed RNA polymerase subunit beta'' from Vitis vinifera (Grape).